The following is a 189-amino-acid chain: Glycerol-3-phosphate acyltransferase 1 (189 aa).

A run of 5 helical transmembrane segments spans residues 12 to 32 (MQFLYLVASYLFGNILTAYIV), 61 to 81 (GYFVATFLGDAIKGAIVVSIA), 88 to 108 (FTFVMLTLLAVIMGHIYPMLF), 124 to 144 (IAFDYLIALTLVAVFIIFYLI), and 164 to 184 (ILYSYSIVTTILSALIIVLIL).

The protein belongs to the PlsY family. Probably interacts with PlsX.

The protein localises to the cell membrane. The catalysed reaction is an acyl phosphate + sn-glycerol 3-phosphate = a 1-acyl-sn-glycero-3-phosphate + phosphate. The protein operates within lipid metabolism; phospholipid metabolism. Catalyzes the transfer of an acyl group from acyl-phosphate (acyl-PO(4)) to glycerol-3-phosphate (G3P) to form lysophosphatidic acid (LPA). This enzyme utilizes acyl-phosphate as fatty acyl donor, but not acyl-CoA or acyl-ACP. This chain is Glycerol-3-phosphate acyltransferase 1, found in Bacillus anthracis.